The primary structure comprises 873 residues: Zinc fingers and homeoboxes protein 1 (873 aa).

The disordered stretch occupies residues 24–63; sequence LISDLDEGPPVLTPVENTRAESISSDEEVHESVDSDNQQN. Phosphothreonine is present on Thr36. A phosphoserine mark is found at Ser45, Ser47, and Ser48. 2 consecutive C2H2-type zinc fingers follow at residues 70-93 and 102-125; these read YECK…DSEH and YVCV…LKYH. A Glycyl lysine isopeptide (Lys-Gly) (interchain with G-Cter in SUMO2) cross-link involves residue Lys159. At Ser202 the chain carries Phosphoserine. The tract at residues 202–236 is disordered; the sequence is SVEDVPEEKENEIKPDREEIVENPSSSASESNTST. Residues 212 to 221 are compositionally biased toward basic and acidic residues; sequence NEIKPDREEI. Residues 223 to 236 show a composition bias toward low complexity; it reads ENPSSSASESNTST. The required for dimerization stretch occupies residues 272–432; sequence NSNLIPKVLI…QNNIQKSQVP (161 aa). Residues 272–564 are required for interaction with NFYA; the sequence is NSNLIPKVLI…AQPKQSWNPF (293 aa). Residues 284–346 constitute a DNA-binding region (homeobox 1); it reads NSIPTYNAAL…LKHGVSWTPE (63 aa). Glycyl lysine isopeptide (Lys-Gly) (interchain with G-Cter in SUMO2) cross-links involve residues Lys441, Lys454, Lys485, and Lys629. 2 DNA-binding regions (homeobox) span residues 464 to 526 and 569 to 630; these read SFGI…KSNQ and PQKF…EEKM. Disordered regions lie at residues 626-667 and 732-770; these read KEEK…ICKK and SSMN…NNWD. Ser648 carries the phosphoserine modification. Positions 660–722 form a DNA-binding region, homeobox 4; it reads STGKICKKTP…YAWKNGNLKW (63 aa). The tract at residues 734–768 is required for nuclear localization; that stretch reads MNGLSSLRKRGRGRPKGRGRGRPRGRPRGSKRINN. A compositionally biased stretch (basic residues) spans 740–764; that stretch reads LRKRGRGRPKGRGRGRPRGRPRGSK. Ser774 bears the Phosphoserine mark. A DNA-binding region (homeobox 5) is located at residues 777 to 832; it reads KFKTGTAILKDYYLKHKFLNEQDLDELVNKSHMGYEQVREWFAERQRRSELGIELF. The segment at 829–873 is disordered; it reads IELFEENEEEDEVIDDQEEDEEETDDSDTWEPPRHVKRKLSKSDD. A compositionally biased stretch (acidic residues) spans 831–857; the sequence is LFEENEEEDEVIDDQEEDEEETDDSDT. The segment at 831-873 is required for repressor activity; the sequence is LFEENEEEDEVIDDQEEDEEETDDSDTWEPPRHVKRKLSKSDD. A compositionally biased stretch (basic residues) spans 863-873; the sequence is HVKRKLSKSDD.

It belongs to the ZHX family. Forms homodimers. Heterodimer (via HD1 domain) with ZHX2 (via HD1 domain). Also forms a heterodimer with ZHX3 which is a prerequisite for repressor activity. Interacts with ATF7IP and NFYA. Interacts (via homeobox domains) with DNMT3B (via PWWP domain). As to expression, ubiquitously expressed. Expressed in podocytes.

The protein localises to the nucleus. In terms of biological role, acts as a transcriptional repressor. Increases DNMT3B-mediated repressive transcriptional activity when DNMT3B is tethered to DNA. May link molecule between DNMT3B and other co-repressor proteins. This chain is Zinc fingers and homeoboxes protein 1 (ZHX1), found in Homo sapiens (Human).